Reading from the N-terminus, the 355-residue chain is Protein-glutamate methylesterase/protein-glutamine glutaminase (355 aa).

Positions Lys-4–Met-121 constitute a Response regulatory domain. Asp-55 carries the 4-aspartylphosphate modification. The region spanning Leu-156–Asn-348 is the CheB-type methylesterase domain. Active-site residues include Ser-168, His-194, and Asp-290.

The protein belongs to the CheB family. In terms of processing, phosphorylated by CheA. Phosphorylation of the N-terminal regulatory domain activates the methylesterase activity.

It is found in the cytoplasm. It catalyses the reaction [protein]-L-glutamate 5-O-methyl ester + H2O = L-glutamyl-[protein] + methanol + H(+). The enzyme catalyses L-glutaminyl-[protein] + H2O = L-glutamyl-[protein] + NH4(+). Functionally, involved in chemotaxis. Part of a chemotaxis signal transduction system that modulates chemotaxis in response to various stimuli. Catalyzes the demethylation of specific methylglutamate residues introduced into the chemoreceptors (methyl-accepting chemotaxis proteins or MCP) by CheR. Also mediates the irreversible deamidation of specific glutamine residues to glutamic acid. The polypeptide is Protein-glutamate methylesterase/protein-glutamine glutaminase (Methylobacillus flagellatus (strain ATCC 51484 / DSM 6875 / VKM B-1610 / KT)).